The following is an 89-amino-acid chain: Inner kinetochore subunit mhf2 (89 aa).

It belongs to the CENP-X/MHF2 family. In terms of assembly, the MHF histone-fold complex is a heterotetramer of 2 mhf1-mhf2 heterodimers. Component of the inner kinetochore constitutive centromere-associated network (CCAN) (also known as central kinetochore Sim4 complex in fission yeast), which is composed of at least cnl2, cnp3, cnp20, fta1, fta2, fta3, fta4, fta6, fta7, mal2, mhf1, mhf2, mis6, mis15, mis17, sim4 and wip1.

The protein localises to the nucleus. Its subcellular location is the cytoplasm. Its function is as follows. Component of a FANCM-MHF complex that promotes gene conversion at blocked replication forks, probably by reversal of the stalled fork. FANCM-MHF promotes non-crossover recombination. In Schizosaccharomyces pombe (strain 972 / ATCC 24843) (Fission yeast), this protein is Inner kinetochore subunit mhf2.